Here is a 421-residue protein sequence, read N- to C-terminus: Threonine--tRNA ligase editing subunit (421 aa).

It belongs to the class-II aminoacyl-tRNA synthetase family. Archaea-specific ThrRS editing domain subfamily. As to quaternary structure, probably interacts with its catalytic subunit.

It is found in the cytoplasm. Functionally, freestanding tRNA editing subunit of threonine--tRNA ligase, the catalytic subunit is probably AC Q9YDW0. Deacylates (edits) mischarged L-seryl-tRNA(Thr) in trans; has no activity on correctly charged L-threonyl-tRNA(Thr). Probably does not aminoacylate tRNA(Thr). Deacylates correctly charged glycyl-tRNA(Gly), but not glycyl-tRNA(Gly)(2'-dA76) (the terminal 2'-OH of tRNA adenine 76 has been dehydroxylated) nor the 2'-fluoro tRNA derivative, strongly suggesting the editing function is catalyzed by the 2'-OH of A76 of tRNA(Thr). This Aeropyrum pernix (strain ATCC 700893 / DSM 11879 / JCM 9820 / NBRC 100138 / K1) protein is Threonine--tRNA ligase editing subunit (thrS2).